The following is an 88-amino-acid chain: Small ribosomal subunit protein bS20 (88 aa).

The disordered stretch occupies residues 1–23 (MANSPQAKKRARQNDKARAHNAS).

Belongs to the bacterial ribosomal protein bS20 family.

Its function is as follows. Binds directly to 16S ribosomal RNA. The polypeptide is Small ribosomal subunit protein bS20 (Teredinibacter turnerae (strain ATCC 39867 / T7901)).